Reading from the N-terminus, the 784-residue chain is Ribosome biogenesis protein BOP1 homolog (784 aa).

Over residues 1–11 (MTKKLALKRKG) the composition is skewed to basic residues. Positions 1-159 (MTKKLALKRK…DSDTSDEEDI (159 aa)) are disordered. Composition is skewed to acidic residues over residues 27–36 (SENEEEEEDL), 45–54 (EDSTDDEGID), 62–73 (SEELQFESDEEG), and 84–111 (AEED…EDEE). A compositionally biased stretch (basic and acidic residues) spans 112–123 (KDSKSKQADDKP). Positions 124–133 (SSSGAASKKA) are enriched in low complexity. A compositionally biased stretch (basic and acidic residues) spans 138–148 (LSKRDTSKPEY). A compositionally biased stretch (acidic residues) spans 149–158 (QDSDTSDEED). 7 WD repeats span residues 445 to 486 (GHTD…RTIE), 488 to 526 (DEVV…KVLV), 570 to 612 (THFK…SQIP), 615 to 653 (KSKG…LVKK), 656 to 695 (TNSK…KPYQ), 699 to 738 (LHRN…DLLQ), and 754 to 784 (RDEF…RLYT).

Belongs to the WD repeat BOP1/ERB1 family.

It is found in the nucleus. Its subcellular location is the nucleolus. The protein resides in the nucleoplasm. Its function is as follows. Required for maturation of ribosomal RNAs and formation of the large ribosomal subunit. This Drosophila yakuba (Fruit fly) protein is Ribosome biogenesis protein BOP1 homolog.